A 245-amino-acid polypeptide reads, in one-letter code: Gas vesicle protein F (245 aa).

The protein belongs to the gas vesicle GvpF/GvpL family. As to quaternary structure, binds GvpA.

The protein localises to the gas vesicle. Functionally, a minor component of the gas vesicle, may be involved in preventing GvpA aggregation during gas vesicle nucleation. Gas vesicles (GV) are hollow, gas filled proteinaceous nanostructures. During planktonic growth they allow positioning of the organism at a favorable depth for light or nutrient acquisition. This is Gas vesicle protein F from Dolichospermum flosaquae (Anabaena flos-aquae).